A 119-amino-acid chain; its full sequence is Large ribosomal subunit protein bL20 (119 aa).

The protein belongs to the bacterial ribosomal protein bL20 family.

Binds directly to 23S ribosomal RNA and is necessary for the in vitro assembly process of the 50S ribosomal subunit. It is not involved in the protein synthesizing functions of that subunit. This is Large ribosomal subunit protein bL20 from Sorangium cellulosum (strain So ce56) (Polyangium cellulosum (strain So ce56)).